Here is a 394-residue protein sequence, read N- to C-terminus: GTPase Obg (394 aa).

One can recognise an Obg domain in the interval 5–163 (SNFVDYVKIY…RMVIMQLKML (159 aa)). Residues 26–45 (HFRREKYIPKGGPDGGDGGR) form a disordered region. Residues 164-330 (ADVGLVGFPN…LKDTLWKELS (167 aa)) enclose the OBG-type G domain. GTP-binding positions include 170-177 (GFPNAGKS), 195-199 (FTTLE), 217-220 (DIPG), 284-287 (TKCD), and 311-313 (SAV). Mg(2+) is bound by residues Ser177 and Thr197.

It belongs to the TRAFAC class OBG-HflX-like GTPase superfamily. OBG GTPase family. As to quaternary structure, monomer. Mg(2+) is required as a cofactor.

Its subcellular location is the cytoplasm. In terms of biological role, an essential GTPase which binds GTP, GDP and possibly (p)ppGpp with moderate affinity, with high nucleotide exchange rates and a fairly low GTP hydrolysis rate. Plays a role in control of the cell cycle, stress response, ribosome biogenesis and in those bacteria that undergo differentiation, in morphogenesis control. This is GTPase Obg from Porphyromonas gingivalis (strain ATCC 33277 / DSM 20709 / CIP 103683 / JCM 12257 / NCTC 11834 / 2561).